We begin with the raw amino-acid sequence, 89 residues long: Small ribosomal subunit protein uS15 (89 aa).

Belongs to the universal ribosomal protein uS15 family. As to quaternary structure, part of the 30S ribosomal subunit. Forms a bridge to the 50S subunit in the 70S ribosome, contacting the 23S rRNA.

One of the primary rRNA binding proteins, it binds directly to 16S rRNA where it helps nucleate assembly of the platform of the 30S subunit by binding and bridging several RNA helices of the 16S rRNA. Functionally, forms an intersubunit bridge (bridge B4) with the 23S rRNA of the 50S subunit in the ribosome. The sequence is that of Small ribosomal subunit protein uS15 from Alcanivorax borkumensis (strain ATCC 700651 / DSM 11573 / NCIMB 13689 / SK2).